The chain runs to 325 residues: Tetraacyldisaccharide 4'-kinase (325 aa).

S53 to T60 serves as a coordination point for ATP.

It belongs to the LpxK family.

It catalyses the reaction a lipid A disaccharide + ATP = a lipid IVA + ADP + H(+). It functions in the pathway glycolipid biosynthesis; lipid IV(A) biosynthesis; lipid IV(A) from (3R)-3-hydroxytetradecanoyl-[acyl-carrier-protein] and UDP-N-acetyl-alpha-D-glucosamine: step 6/6. Functionally, transfers the gamma-phosphate of ATP to the 4'-position of a tetraacyldisaccharide 1-phosphate intermediate (termed DS-1-P) to form tetraacyldisaccharide 1,4'-bis-phosphate (lipid IVA). The sequence is that of Tetraacyldisaccharide 4'-kinase from Actinobacillus succinogenes (strain ATCC 55618 / DSM 22257 / CCUG 43843 / 130Z).